The primary structure comprises 804 residues: Chondroitin sulfate synthase mig-22 (804 aa).

The Cytoplasmic segment spans residues 1-6 (MVGGGR). Residues 7–27 (TGIHLLLGFLIGAALALFFFS) form a helical; Signal-anchor for type II membrane protein membrane-spanning segment. At 28–804 (STPSIDLTSS…QLAKLLFHEK (777 aa)) the chain is on the lumenal side. Asparagine 123, asparagine 172, and asparagine 268 each carry an N-linked (GlcNAc...) asparagine glycan.

The protein belongs to the chondroitin N-acetylgalactosaminyltransferase family. Interacts with sqv-5. A divalent metal cation serves as cofactor. As to expression, expressed in seam cells, the vulval epithelium and in oocytes (at protein level).

The protein localises to the golgi apparatus. It localises to the golgi stack membrane. The enzyme catalyses 3-O-(beta-D-GlcA-(1-&gt;3)-beta-D-GalNAc-(1-&gt;4)-beta-D-GlcA-(1-&gt;3)-beta-D-Gal-(1-&gt;3)-beta-D-Gal-(1-&gt;4)-beta-D-Xyl)-L-seryl-[protein] + UDP-N-acetyl-alpha-D-galactosamine = 3-O-(beta-D-GalNAc-(1-&gt;4)-beta-D-GlcA-(1-&gt;3)-beta-D-GalNAc-(1-&gt;4)-beta-D-GlcA-(1-&gt;3)-beta-D-Gal-(1-&gt;3)-beta-D-Gal-(1-&gt;4)-beta-D-Xyl)-L-seryl-[protein] + UDP + H(+). It catalyses the reaction 3-O-{beta-D-GlcA-(1-&gt;3)-[beta-D-GalNAc-(1-&gt;4)-beta-D-GlcA-(1-&gt;3)](n)-beta-D-GalNAc-(1-&gt;4)-beta-D-GlcA-(1-&gt;3)-beta-D-Gal-(1-&gt;3)-beta-D-Gal-(1-&gt;4)-beta-D-Xyl}-L-seryl-[protein] + UDP-N-acetyl-alpha-D-galactosamine = 3-O-{[beta-D-GalNAc-(1-&gt;4)-beta-D-GlcA-(1-&gt;3)](n+1)-beta-D-GalNAc-(1-&gt;4)-beta-D-GlcA-(1-&gt;3)-beta-D-Gal-(1-&gt;3)-beta-D-Gal-(1-&gt;4)-beta-D-Xyl}-L-seryl-[protein] + UDP + H(+). It carries out the reaction 3-O-(beta-D-GalNAc-(1-&gt;4)-beta-D-GlcA-(1-&gt;3)-beta-D-Gal-(1-&gt;3)-beta-D-Gal-(1-&gt;4)-beta-D-Xyl)-L-seryl-[protein] + UDP-alpha-D-glucuronate = 3-O-(beta-D-GlcA-(1-&gt;3)-beta-D-GalNAc-(1-&gt;4)-beta-D-GlcA-(1-&gt;3)-beta-D-Gal-(1-&gt;3)-beta-D-Gal-(1-&gt;4)-beta-D-Xyl)-L-seryl-[protein] + UDP + H(+). The catalysed reaction is 3-O-{[beta-D-GalNAc-(1-&gt;4)-beta-D-GlcA-(1-&gt;3)](n)-beta-D-GalNAc-(1-&gt;4)-beta-D-GlcA-(1-&gt;3)-beta-D-Gal-(1-&gt;3)-beta-D-Gal-(1-&gt;4)-beta-D-Xyl}-L-seryl-[protein] + UDP-alpha-D-glucuronate = 3-O-{beta-D-GlcA-(1-&gt;3)-[beta-D-GalNAc-(1-&gt;4)-beta-D-GlcA-(1-&gt;3)](n)-beta-D-GalNAc-(1-&gt;4)-beta-D-GlcA-(1-&gt;3)-beta-D-Gal-(1-&gt;3)-beta-D-Gal-(1-&gt;4)-beta-D-Xyl}-L-seryl-[protein] + UDP + H(+). Has both beta-1,3-glucuronic acid and beta-1,4-N-acetylgalactosamine transferase activity. Transfers glucuronic acid (GlcUA) from UDP-GlcUA and N-acetylgalactosamine (GalNAc) from UDP-GalNAc to the non-reducing end of the elongating chondroitin polymer. Required together with sqv-5 for the biosynthesis of chondroitin. Chondroitin is involved in organogenesis of the vulva, maturation of the gonad, and neural development. May have a specific role in unc-6/netrin-mediated dorsal guidance of gonadal distal tip cells. Glycosyltransferase activity is weak. The polypeptide is Chondroitin sulfate synthase mig-22 (mig-22) (Caenorhabditis elegans).